Reading from the N-terminus, the 338-residue chain is Glyceraldehyde-3-phosphate dehydrogenase 1 (338 aa).

Residues Thr13–Ile14 and Gly111 each bind NAD(+). Position 140–142 (Ser140–Asn142) interacts with D-glyceraldehyde 3-phosphate. Catalysis depends on Cys141, which acts as the Nucleophile. Arg169 provides a ligand contact to NAD(+). His195 to Gly196 contacts D-glyceraldehyde 3-phosphate. Gln300 is an NAD(+) binding site.

The protein belongs to the glyceraldehyde-3-phosphate dehydrogenase family. As to quaternary structure, homotetramer.

The protein resides in the cytoplasm. It catalyses the reaction D-glyceraldehyde 3-phosphate + phosphate + NADP(+) = (2R)-3-phospho-glyceroyl phosphate + NADPH + H(+). The catalysed reaction is D-glyceraldehyde 3-phosphate + phosphate + NAD(+) = (2R)-3-phospho-glyceroyl phosphate + NADH + H(+). It participates in carbohydrate degradation; glycolysis; pyruvate from D-glyceraldehyde 3-phosphate: step 1/5. This is Glyceraldehyde-3-phosphate dehydrogenase 1 from Methanosarcina barkeri (strain Fusaro / DSM 804).